The following is a 283-amino-acid chain: Acetylglutamate kinase (283 aa).

Residues 64 to 65 (GG), Arg-86, and Asn-178 contribute to the substrate site.

It belongs to the acetylglutamate kinase family. ArgB subfamily.

It localises to the cytoplasm. The enzyme catalyses N-acetyl-L-glutamate + ATP = N-acetyl-L-glutamyl 5-phosphate + ADP. It functions in the pathway amino-acid biosynthesis; L-arginine biosynthesis; N(2)-acetyl-L-ornithine from L-glutamate: step 2/4. In terms of biological role, catalyzes the ATP-dependent phosphorylation of N-acetyl-L-glutamate. The polypeptide is Acetylglutamate kinase (Lactococcus lactis subsp. lactis (strain IL1403) (Streptococcus lactis)).